The following is a 224-amino-acid chain: Zinc finger C4H2 domain-containing protein (224 aa).

A coiled-coil region spans residues 11–104 (LESIKEIRNK…RRLHDEYKPL (94 aa)). A C4H2-type zinc finger spans residues 189-206 (CLSCHQQIHRNAPICPLC).

In terms of tissue distribution, expressed in fetal tissues, including in brain, intestine, lung, kidney and muscle. Isoform 1 is expressed in numerous fetal brain regions. Isoform 3 is highly expressed in numerous fetal brain regions and spinal cord.

It localises to the cytoplasm. The protein localises to the nucleus. It is found in the postsynaptic cell membrane. In terms of biological role, plays a role in interneurons differentiation. Involved in neuronal development and in neuromuscular junction formation. The sequence is that of Zinc finger C4H2 domain-containing protein (ZC4H2) from Homo sapiens (Human).